The chain runs to 203 residues: Ribosomal RNA large subunit methyltransferase E (203 aa).

S-adenosyl-L-methionine-binding residues include G59, W61, D79, N95, and D118. The active-site Proton acceptor is K158.

Belongs to the class I-like SAM-binding methyltransferase superfamily. RNA methyltransferase RlmE family.

It localises to the cytoplasm. The catalysed reaction is uridine(2552) in 23S rRNA + S-adenosyl-L-methionine = 2'-O-methyluridine(2552) in 23S rRNA + S-adenosyl-L-homocysteine + H(+). Specifically methylates the uridine in position 2552 of 23S rRNA at the 2'-O position of the ribose in the fully assembled 50S ribosomal subunit. This Wigglesworthia glossinidia brevipalpis protein is Ribosomal RNA large subunit methyltransferase E.